Reading from the N-terminus, the 200-residue chain is Transgelin (200 aa).

Ser2 carries the post-translational modification N-acetylserine. Phosphoserine is present on Ser11. The region spanning Pro26–Ala136 is the Calponin-homology (CH) domain. Positions Phe144–Gln168 are disordered. The interval Leu151–Pro164 is interaction with SH3 domain of ABP1. Residues Lys154–Lys165 show a composition bias toward basic residues.

As to quaternary structure, binds to actin. Interacts with ABP1.

It localises to the cytoplasm. The protein resides in the cytoskeleton. Its subcellular location is the actin patch. Its function is as follows. Has actin-binding and actin-bundling activity. Stabilizes actin filaments against disassembly. The sequence is that of Transgelin (SCP1) from Saccharomyces cerevisiae (strain ATCC 204508 / S288c) (Baker's yeast).